A 277-amino-acid polypeptide reads, in one-letter code: Shikimate dehydrogenase (NADP(+)) (277 aa).

Residues 15–17 and Thr-62 contribute to the shikimate site; that span reads SLS. The Proton acceptor role is filled by Lys-66. Residues Asn-87 and Asp-102 each contribute to the shikimate site. NADP(+)-binding positions include 127 to 131, 151 to 156, and Ile-219; these read GAGGA and NRTVDK. Tyr-221 serves as a coordination point for shikimate. Gly-242 provides a ligand contact to NADP(+).

Belongs to the shikimate dehydrogenase family. As to quaternary structure, homodimer.

The enzyme catalyses shikimate + NADP(+) = 3-dehydroshikimate + NADPH + H(+). Its pathway is metabolic intermediate biosynthesis; chorismate biosynthesis; chorismate from D-erythrose 4-phosphate and phosphoenolpyruvate: step 4/7. Its function is as follows. Involved in the biosynthesis of the chorismate, which leads to the biosynthesis of aromatic amino acids. Catalyzes the reversible NADPH linked reduction of 3-dehydroshikimate (DHSA) to yield shikimate (SA). In Bacillus thuringiensis subsp. konkukian (strain 97-27), this protein is Shikimate dehydrogenase (NADP(+)).